The chain runs to 75 residues: Conotoxin Vn5.5 (75 aa).

Positions 1-19 are cleaved as a signal peptide; the sequence is MLCLPVFIILLLLASPAAP. Residues 20 to 59 constitute a propeptide that is removed on maturation; that stretch reads NPLEKRIQSDLIRAALEDADMKTDEREIVNIIDSISDVAK. At Gln60 the chain carries Pyrrolidone carboxylic acid.

The protein belongs to the conotoxin T superfamily. In terms of processing, contains 2 disulfide bonds that can be either 'C1-C3, C2-C4' or 'C1-C4, C2-C3', since these disulfide connectivities have been observed for conotoxins with cysteine framework V (for examples, see AC P0DQQ7 and AC P81755). Expressed by the venom duct.

The protein resides in the secreted. The chain is Conotoxin Vn5.5 from Conus ventricosus (Mediterranean cone).